A 152-amino-acid polypeptide reads, in one-letter code: Snaclec coagulation factor IX/factor X-binding protein subunit A (152 aa).

Residues 1 to 23 (MGRFIFMSFGLLVVAASLRGTGA) form the signal peptide. The C-type lectin domain maps to 24-152 (DCLSGWSSYE…GQQNPFVCEA (129 aa)). Cystine bridges form between Cys25–Cys36, Cys53–Cys150, and Cys125–Cys142. Ca(2+) contacts are provided by Ser64, Glu66, and Glu70. Position 151 (Glu151) interacts with Ca(2+).

The protein belongs to the snaclec family. As to quaternary structure, heterodimer of subunits A and B; disulfide-linked. In terms of tissue distribution, expressed by the venom gland.

It localises to the secreted. In terms of biological role, anticoagulant protein which binds to the gamma-carboxyglutamic acid-domain regions of factors IX (F9) and factor X (F10) in the presence of calcium with a 1 to 1 stoichiometry. This Protobothrops flavoviridis (Habu) protein is Snaclec coagulation factor IX/factor X-binding protein subunit A.